The chain runs to 518 residues: Beta-TrCP (518 aa).

Over residues 1 to 12 (MEGFSCSLQPPT) the composition is skewed to polar residues. Positions 1–24 (MEGFSCSLQPPTASEREDCNRDEP) are disordered. The segment covering 14–24 (SEREDCNRDEP) has biased composition (basic and acidic residues). The 39-residue stretch at 119–157 (DHIAENILSYLDAKSLCSAELVCKEWYRVTSDGMLWKKL) folds into the F-box domain. 7 WD repeats span residues 230 to 258 (ETSKGVYCLQYDDQKIVSGLRDNTIKIWD), 270 to 298 (GHTGSVLCLQYDERVIITGSSDSTVRVWD), 310 to 338 (HHCEAVLHLRFNNGMMVTCSKDRSIAVWD), 353 to 381 (GHRAAVNVVDFDDKYIVSASGDRTIKVWN), 393 to 421 (GHKRGIACLQYRDRLVVSGSSDNTIRLWD), 433 to 461 (GHEELVRCIRFDNKRIVSGAYDGKIKVWD), and 482 to 510 (EHSGRVFRLQFDEFQIVSSSHDDTILIWD).

As to quaternary structure, part of a SCF (SKP1-cullin-F-box) ubiquitin-protein ligase complex. Interacts with fbxo5.

Its function is as follows. Substrate recognition component of a SCF (SKP1-CUL1-F-box protein) E3 ubiquitin-protein ligase complex which mediates the ubiquitination and subsequent proteasomal degradation of target proteins. Probably recognizes and binds to phosphorylated target proteins. May participate in Wnt signaling. The polypeptide is Beta-TrCP (fbxw1) (Xenopus laevis (African clawed frog)).